The following is a 191-amino-acid chain: dCTP deaminase, dUMP-forming (191 aa).

DCTP is bound by residues 101-106 (KSSLGR), D119, 127-129 (TLE), Q148, Y162, and Q174. Catalysis depends on E129, which acts as the Proton donor/acceptor. Residues 169-191 (NRYQGQRGPTASRSHLNFHRTRI) are disordered. Over residues 171-183 (YQGQRGPTASRSH) the composition is skewed to polar residues.

This sequence belongs to the dCTP deaminase family. In terms of assembly, homotrimer.

The catalysed reaction is dCTP + 2 H2O = dUMP + NH4(+) + diphosphate. Its pathway is pyrimidine metabolism; dUMP biosynthesis; dUMP from dCTP: step 1/1. Its function is as follows. Bifunctional enzyme that catalyzes both the deamination of dCTP to dUTP and the hydrolysis of dUTP to dUMP without releasing the toxic dUTP intermediate. The polypeptide is dCTP deaminase, dUMP-forming (Pseudarthrobacter chlorophenolicus (strain ATCC 700700 / DSM 12829 / CIP 107037 / JCM 12360 / KCTC 9906 / NCIMB 13794 / A6) (Arthrobacter chlorophenolicus)).